A 352-amino-acid chain; its full sequence is N-acetyl-gamma-glutamyl-phosphate reductase (352 aa).

Cysteine 155 is an active-site residue.

It belongs to the NAGSA dehydrogenase family. Type 1 subfamily.

Its subcellular location is the cytoplasm. It carries out the reaction N-acetyl-L-glutamate 5-semialdehyde + phosphate + NADP(+) = N-acetyl-L-glutamyl 5-phosphate + NADPH + H(+). It participates in amino-acid biosynthesis; L-arginine biosynthesis; N(2)-acetyl-L-ornithine from L-glutamate: step 3/4. Its function is as follows. Catalyzes the NADPH-dependent reduction of N-acetyl-5-glutamyl phosphate to yield N-acetyl-L-glutamate 5-semialdehyde. In Rippkaea orientalis (strain PCC 8801 / RF-1) (Cyanothece sp. (strain PCC 8801)), this protein is N-acetyl-gamma-glutamyl-phosphate reductase.